The primary structure comprises 517 residues: Alpha-amylase (517 aa).

The first 21 residues, methionine 1–glycine 21, serve as a signal peptide directing secretion. Cysteine 52 and cysteine 108 are oxidised to a cystine. Residues asparagine 122, arginine 178, and aspartate 187 each coordinate Ca(2+). Arginine 215 contacts chloride. Aspartate 217 (nucleophile) is an active-site residue. Residue histidine 221 participates in Ca(2+) binding. Residue glutamate 253 is the Proton donor of the active site. Residue arginine 355 participates in chloride binding. Disulfide bonds link cysteine 397–cysteine 403 and cysteine 470–cysteine 482.

The protein belongs to the glycosyl hydrolase 13 family. In terms of assembly, monomer. It depends on Ca(2+) as a cofactor. Requires chloride as cofactor.

The protein localises to the secreted. It catalyses the reaction Endohydrolysis of (1-&gt;4)-alpha-D-glucosidic linkages in polysaccharides containing three or more (1-&gt;4)-alpha-linked D-glucose units.. Activated by chloride ions. Inhibited by acarbose. Not inhibited by wheat alpha-amylase inhibitors 1 (WI-1, the tetrameric form) or 3 (WI-3, the monomeric form) and bean alpha-amylase inhibitor 1 (alphaAI-1). The protein is Alpha-amylase of Acarus siro (Flour mite).